We begin with the raw amino-acid sequence, 393 residues long: Acetyl-CoA acetyltransferase (393 aa).

C88 serves as the catalytic Acyl-thioester intermediate. Active-site proton acceptor residues include H349 and C379.

Belongs to the thiolase-like superfamily. Thiolase family.

Its subcellular location is the cytoplasm. The enzyme catalyses 2 acetyl-CoA = acetoacetyl-CoA + CoA. The protein operates within metabolic intermediate biosynthesis; (R)-mevalonate biosynthesis; (R)-mevalonate from acetyl-CoA: step 1/3. In Pseudomonas aeruginosa (strain ATCC 15692 / DSM 22644 / CIP 104116 / JCM 14847 / LMG 12228 / 1C / PRS 101 / PAO1), this protein is Acetyl-CoA acetyltransferase (atoB).